The sequence spans 268 residues: Mesoderm posterior protein 1 (268 aa).

Residues 17–93 (AAWGPTRRPP…RQSASEREKL (77 aa)) form a disordered region. Over residues 36 to 48 (LVSSPDSWGSTPA) the composition is skewed to polar residues. Low complexity predominate over residues 66–86 (APSVGRRGARSSRLGSGQRQS). The bHLH domain maps to 82–136 (GQRQSASEREKLRMRTLARALHELRRFLPPSVAPAGQSLTKIETLRLAIRYIGHL). The CPLCP motif lies at 163 to 167 (CPLCP). 2 repeat units span residues 182–183 (GQ) and 184–185 (GQ). Residues 182 to 185 (GQGQ) form a 2 X 2 AA tandem repeats of G-Q region.

The protein resides in the nucleus. Its function is as follows. Transcription factor. Plays a role in the epithelialization of somitic mesoderm and in the development of cardiac mesoderm. Defines the rostrocaudal patterning of the somites by participating in distinct Notch pathways. The protein is Mesoderm posterior protein 1 (MESP1) of Homo sapiens (Human).